We begin with the raw amino-acid sequence, 72 residues long: Antitoxin VapB11 (72 aa).

In terms of biological role, antitoxin component of a type II toxin-antitoxin (TA) system. The protein is Antitoxin VapB11 (vapB11) of Mycobacterium tuberculosis (strain CDC 1551 / Oshkosh).